Here is a 261-residue protein sequence, read N- to C-terminus: uncharacterized protein (261 aa).

Residues 7 to 122 form the Response regulatory domain; sequence TAVLADDEPL…RLASCCEKLQ (116 aa). Asp-54 carries the post-translational modification 4-aspartylphosphate. The HTH LytTR-type domain occupies 157–261; it reads LKASKGEEIH…RALQHLFKVS (105 aa).

This is an uncharacterized protein from Vibrio cholerae serotype O1 (strain ATCC 39315 / El Tor Inaba N16961).